A 413-amino-acid chain; its full sequence is Phosphoglycerate kinase (413 aa).

Residues 24–26, Arg39, 62–65, Arg123, and Arg165 contribute to the substrate site; these read DFN and HLSR. Residues Lys216, Glu343, and 369 to 372 each bind ATP; that span reads GGDS.

This sequence belongs to the phosphoglycerate kinase family. As to quaternary structure, monomer.

The protein resides in the cytoplasm. It catalyses the reaction (2R)-3-phosphoglycerate + ATP = (2R)-3-phospho-glyceroyl phosphate + ADP. It participates in carbohydrate degradation; glycolysis; pyruvate from D-glyceraldehyde 3-phosphate: step 2/5. The chain is Phosphoglycerate kinase from Mycoplasmoides gallisepticum (strain R(low / passage 15 / clone 2)) (Mycoplasma gallisepticum).